The chain runs to 157 residues: Vitamin K-dependent protein C (157 aa).

A Peptidase S1 domain is found at 1-157 (EKWELDLDIK…GCGRLHNYGV (157 aa)). Asn-17 carries an N-linked (GlcNAc...) asparagine glycan. Asp-26 acts as the Charge relay system in catalysis. Asn-78 carries an N-linked (GlcNAc...) asparagine glycan. Disulfide bonds link Cys-96-Cys-110 and Cys-121-Cys-149. Ser-125 acts as the Charge relay system in catalysis.

It belongs to the peptidase S1 family. Plasma; synthesized in the liver.

Its subcellular location is the secreted. The protein resides in the golgi apparatus. It is found in the endoplasmic reticulum. It carries out the reaction Degradation of blood coagulation factors Va and VIIIa.. Its function is as follows. Protein C is a vitamin K-dependent serine protease that regulates blood coagulation by inactivating factors Va and VIIIa in the presence of calcium ions and phospholipids. Exerts a protective effect on the endothelial cell barrier function. The polypeptide is Vitamin K-dependent protein C (PROC) (Felis catus (Cat)).